A 415-amino-acid chain; its full sequence is Casein kinase I isoform delta (415 aa).

Residues 9-277 (YRLGRKIGSG…YLRQLFRNLF (269 aa)) enclose the Protein kinase domain. ATP contacts are provided by residues 15–23 (IGSGSFGDI) and Lys-38. Asp-128 (proton acceptor) is an active-site residue. Residues 278–364 (HRQGFSYDYV…TSPRPVSGME (87 aa)) are centrosomal localization signal (CLS). Residues 301 to 315 (ADDAERERRDREERL) show a composition bias toward basic and acidic residues. Residues 301 to 415 (ADDAERERRD…SSGLQSVVHR (115 aa)) are disordered. The tract at residues 317–342 (HSRNPATRGLPSTASGRLRGTQEVAP) is autoinhibitory. Residues Ser-328 and Ser-331 each carry the phosphoserine modification. The span at 347 to 358 (TPTSHTANTSPR) shows a compositional bias: polar residues. Ser-370 is subject to Phosphoserine. Position 375 is an omega-N-methylarginine (Arg-375). Over residues 380–400 (NISSSDLTGRQDTSRMSTSQI) the composition is skewed to polar residues. A phosphoserine mark is found at Ser-382, Ser-383, Ser-384, Ser-407, and Ser-411.

The protein belongs to the protein kinase superfamily. CK1 Ser/Thr protein kinase family. Casein kinase I subfamily. In terms of assembly, monomer. Component of the circadian core oscillator, which includes the CRY proteins, CLOCK, or NPAS2, ARTNL/BMAL1 or ARTNL2/BMAL2, CSNK1D and/or CSNK1E, TIMELESS and the PER proteins. Interacts with DNMT1 and MAP1A. Interacts directly with PER1 and PER2 which may lead to their degradation. Interacts with MAPT/TAU, SNAPIN, DBNDD2, AIB1/NCOA3 and ESR1. Interacts with AKAP9/AKAP450; this interaction promotes centrosomal subcellular location. Binds to tubulins in mitotic cells upon DNA damage. Interacts with GJA1. Interacts with DDX3X; this interaction enhances CSNK1D kinase activity in vitro, but it is unclear whether this interaction is physiologically relevant. Interacts with FAM83A, FAM83B, FAM83E and FAM83H (via DUF1669). In terms of processing, autophosphorylated on serine and threonine residues; this autophosphorylation represses activity. Reactivated by phosphatase-mediated dephosphorylation. May be dephosphorylated by PP1.

The protein resides in the cytoplasm. It localises to the nucleus. It is found in the cytoskeleton. The protein localises to the microtubule organizing center. Its subcellular location is the centrosome. The protein resides in the perinuclear region. It localises to the cell membrane. It is found in the spindle. The protein localises to the golgi apparatus. The catalysed reaction is L-seryl-[protein] + ATP = O-phospho-L-seryl-[protein] + ADP + H(+). The enzyme catalyses L-threonyl-[protein] + ATP = O-phospho-L-threonyl-[protein] + ADP + H(+). It catalyses the reaction L-seryl-[tau protein] + ATP = O-phospho-L-seryl-[tau protein] + ADP + H(+). It carries out the reaction L-threonyl-[tau protein] + ATP = O-phospho-L-threonyl-[tau protein] + ADP + H(+). With respect to regulation, exhibits substrate-dependent heparin activation. Drug-mediated inhibition leads to a delay of the oscillations with the magnitude of this effect dependent upon the timing of drug administration. Inhibited by phosphorylation. Functionally, essential serine/threonine-protein kinase that regulates diverse cellular growth and survival processes including Wnt signaling, DNA repair and circadian rhythms. It can phosphorylate a large number of proteins. Casein kinases are operationally defined by their preferential utilization of acidic proteins such as caseins as substrates. Phosphorylates connexin-43/GJA1, MAP1A, SNAPIN, MAPT/TAU, TOP2A, DCK, HIF1A, EIF6, p53/TP53, DVL2, DVL3, ESR1, AIB1/NCOA3, DNMT1, PKD2, YAP1, PER1 and PER2. Central component of the circadian clock. In balance with PP1, determines the circadian period length through the regulation of the speed and rhythmicity of PER1 and PER2 phosphorylation. Controls PER1 and PER2 nuclear transport and degradation. YAP1 phosphorylation promotes its SCF(beta-TRCP) E3 ubiquitin ligase-mediated ubiquitination and subsequent degradation. DNMT1 phosphorylation reduces its DNA-binding activity. Phosphorylation of ESR1 and AIB1/NCOA3 stimulates their activity and coactivation. Phosphorylation of DVL2 and DVL3 regulates WNT3A signaling pathway that controls neurite outgrowth. Phosphorylates NEDD9/HEF1. EIF6 phosphorylation promotes its nuclear export. Triggers down-regulation of dopamine receptors in the forebrain. Activates DCK in vitro by phosphorylation. TOP2A phosphorylation favors DNA cleavable complex formation. May regulate the formation of the mitotic spindle apparatus in extravillous trophoblast. Modulates connexin-43/GJA1 gap junction assembly by phosphorylation. Probably involved in lymphocyte physiology. Regulates fast synaptic transmission mediated by glutamate. The chain is Casein kinase I isoform delta (CSNK1D) from Pongo abelii (Sumatran orangutan).